The chain runs to 548 residues: Chaperonin GroEL (548 aa).

ATP contacts are provided by residues Thr-29 to Pro-32, Lys-50, Asp-86 to Thr-90, Gly-416, and Asp-497.

Belongs to the chaperonin (HSP60) family. Forms a cylinder of 14 subunits composed of two heptameric rings stacked back-to-back. Interacts with the co-chaperonin GroES.

The protein resides in the cytoplasm. The enzyme catalyses ATP + H2O + a folded polypeptide = ADP + phosphate + an unfolded polypeptide.. Functionally, together with its co-chaperonin GroES, plays an essential role in assisting protein folding. The GroEL-GroES system forms a nano-cage that allows encapsulation of the non-native substrate proteins and provides a physical environment optimized to promote and accelerate protein folding. The sequence is that of Chaperonin GroEL from Neorickettsia risticii (Ehrlichia risticii).